The sequence spans 123 residues: Protein Wnt-7b (123 aa).

Ser-1 is lipidated: O-palmitoleoyl serine; by PORCN. The interval 33-61 (VEAVRATRLRQPTFLKIKKPRTYRKPMVT) is disordered linker. Cys-89 and Cys-104 are disulfide-bonded. N-linked (GlcNAc...) asparagine glycosylation is present at Asn-90.

Belongs to the Wnt family. Post-translationally, palmitoleoylation is required for efficient binding to frizzled receptors. Depalmitoleoylation leads to Wnt signaling pathway inhibition.

The protein resides in the secreted. Its subcellular location is the extracellular space. It localises to the extracellular matrix. In terms of biological role, ligand for members of the frizzled family of seven transmembrane receptors that functions in the canonical Wnt/beta-catenin signaling pathway. Required for normal fusion of the chorion and the allantois during placenta development. Required for central nervous system (CNS) angiogenesis and blood-brain barrier regulation. This chain is Protein Wnt-7b (WNT-7B), found in Alopias vulpinus (Common thresher shark).